The following is a 459-amino-acid chain: ATP-dependent protease ATPase subunit HslU (459 aa).

Residues Val-26, 68–73 (GVGKTE), Asp-271, Glu-337, and Arg-409 each bind ATP.

Belongs to the ClpX chaperone family. HslU subfamily. As to quaternary structure, a double ring-shaped homohexamer of HslV is capped on each side by a ring-shaped HslU homohexamer. The assembly of the HslU/HslV complex is dependent on binding of ATP.

The protein resides in the cytoplasm. In terms of biological role, ATPase subunit of a proteasome-like degradation complex; this subunit has chaperone activity. The binding of ATP and its subsequent hydrolysis by HslU are essential for unfolding of protein substrates subsequently hydrolyzed by HslV. HslU recognizes the N-terminal part of its protein substrates and unfolds these before they are guided to HslV for hydrolysis. This is ATP-dependent protease ATPase subunit HslU from Xylella fastidiosa (strain M23).